Reading from the N-terminus, the 547-residue chain is Chaperonin GroEL 1 (547 aa).

ATP-binding positions include T30–P33, K51, D87–T91, G415, and D496. The tract at residues K525 to M547 is disordered. Gly residues predominate over residues G533–M547.

The protein belongs to the chaperonin (HSP60) family. Forms a cylinder of 14 subunits composed of two heptameric rings stacked back-to-back. Interacts with the co-chaperonin GroES.

Its subcellular location is the cytoplasm. The enzyme catalyses ATP + H2O + a folded polypeptide = ADP + phosphate + an unfolded polypeptide.. In terms of biological role, together with its co-chaperonin GroES, plays an essential role in assisting protein folding. The GroEL-GroES system forms a nano-cage that allows encapsulation of the non-native substrate proteins and provides a physical environment optimized to promote and accelerate protein folding. In Cereibacter sphaeroides (strain ATCC 17023 / DSM 158 / JCM 6121 / CCUG 31486 / LMG 2827 / NBRC 12203 / NCIMB 8253 / ATH 2.4.1.) (Rhodobacter sphaeroides), this protein is Chaperonin GroEL 1.